A 131-amino-acid chain; its full sequence is C-glycoside deglycosidase beta subunit (131 aa).

Belongs to the C-glycoside deglycosidase beta subunit family. In terms of assembly, heterodimer composed of an alpha subunit (CarB1) and a beta subunit (CarC1). The cofactor is Mg(2+).

It carries out the reaction 3''-dehydroisovitexin = 1,5-anhydro-D-erythro-hex-1-en-3-ulose + apigenin. With respect to regulation, activity is strongly reduced in the presence of chelating agents. In terms of biological role, carbon-carbon bond-cleaving enzyme which participates in the metabolism of C-glycosides. Acts on the C6-glycosylated compound 3''-dehydroisovitexin (3''-oxo-isovitexin). Shows weak activity with 3''-dehydroisoorientin (3''-oxo-homoorientin) and 3'-dehydromangiferin (3'-oxo-mangiferin). This chain is C-glycoside deglycosidase beta subunit, found in Arthrobacter globiformis (strain ATCC 8010 / DSM 20124 / JCM 1332 / NBRC 12137 / NCIMB 8907 / NRRL B-2979 / 168).